A 703-amino-acid chain; its full sequence is DNA ligase (703 aa).

The segment at 1–20 is disordered; sequence MNDNLDLFSGAAPAAPESGA. Low complexity predominate over residues 9 to 20; the sequence is SGAAPAAPESGA. Residues 53-57, 102-103, and E139 contribute to the NAD(+) site; these read DGEYD and SI. K141 functions as the N6-AMP-lysine intermediate in the catalytic mechanism. NAD(+) contacts are provided by R162, E200, K321, and K345. Residues C439, C442, C457, and C463 each contribute to the Zn(2+) site. The region spanning 622–703 is the BRCT domain; sequence QTAQPLAGMT…MLALLAGGDR (82 aa).

Belongs to the NAD-dependent DNA ligase family. LigA subfamily. Mg(2+) is required as a cofactor. The cofactor is Mn(2+).

The catalysed reaction is NAD(+) + (deoxyribonucleotide)n-3'-hydroxyl + 5'-phospho-(deoxyribonucleotide)m = (deoxyribonucleotide)n+m + AMP + beta-nicotinamide D-nucleotide.. Functionally, DNA ligase that catalyzes the formation of phosphodiester linkages between 5'-phosphoryl and 3'-hydroxyl groups in double-stranded DNA using NAD as a coenzyme and as the energy source for the reaction. It is essential for DNA replication and repair of damaged DNA. The protein is DNA ligase of Delftia acidovorans (strain DSM 14801 / SPH-1).